The chain runs to 314 residues: Regulator of microtubule dynamics protein 1 (314 aa).

Lys-165 bears the N6-succinyllysine mark. 2 TPR repeats span residues 168–204 and 222–258; these read AICLSDVGDYEGIKAKIANAYIIKEHFEKAIELNPKD and PWYQRRIAKMLFATPPSSTYEKALGYFHRAEQVDPNF.

This sequence belongs to the RMDN family. In terms of assembly, interacts with microtubules.

It is found in the cytoplasm. The protein resides in the cytoskeleton. The protein localises to the spindle. Its subcellular location is the spindle pole. This chain is Regulator of microtubule dynamics protein 1 (RMDN1), found in Homo sapiens (Human).